The primary structure comprises 251 residues: Appressoria-specific virulence factor GAS1 (251 aa).

Positions methionine 1–glycine 21 are cleaved as a signal peptide. Positions valine 40–glutamine 76 are disordered. The span at glutamine 54–aspartate 66 shows a compositional bias: polar residues.

The protein localises to the cytoplasm. Its function is as follows. Appressoria-specific virulence factor required for appressorial penetration in host and lesion development. The sequence is that of Appressoria-specific virulence factor GAS1 from Pyricularia oryzae (strain 70-15 / ATCC MYA-4617 / FGSC 8958) (Rice blast fungus).